The primary structure comprises 367 residues: Trans-enoyl reductase opdC (367 aa).

NADP(+)-binding positions include 47–50 (YDAK), 199–202 (SPHN), Y217, 264–265 (LD), and 353–354 (IT).

Belongs to the zinc-containing alcohol dehydrogenase family. As to quaternary structure, monomer.

It participates in secondary metabolite biosynthesis. In terms of biological role, trans-enoyl reductase; part of the gene cluster that mediates the biosynthesis of oxopyrrolidines, polyketide-amino acid hybrid compounds with feature structures of tetramic acid. The polyketide chain is first assembled by the highly reducing PKS module of opdA using acetyl-CoA as the starter unit and five malonyl-CoA as the extender units. OpdC acts as a trans-acting enoyl reductase and reduces the terminal alkenyl to alkane. The 17R in oxopyrrolidine A and 15R, 17S in oxopyrrolidine B are generated by non-stereospecific catalysis of the ketoreductase (KR) domain and enoyl reductases. Then the polyketides with specific configurations are transferred to the NRPS module of opdA and linked to L-tyrosine to form an amide bond. Finally, the oxopyrrolidines are offloaded through a Dieckmann cyclization catalyzed by the terminal D domain to give a tetramic acid moiety. The protein is Trans-enoyl reductase opdC of Penicillium oxalicum (strain 114-2 / CGMCC 5302) (Penicillium decumbens).